Here is a 316-residue protein sequence, read N- to C-terminus: Retinol dehydrogenase 12 (316 aa).

G46 to G52 is a binding site for NADP(+). S175 contributes to the substrate binding site. The active-site Proton acceptor is the Y200.

This sequence belongs to the short-chain dehydrogenases/reductases (SDR) family. As to expression, expressed in the retina.

The enzyme catalyses all-trans-retinol + NADP(+) = all-trans-retinal + NADPH + H(+). The catalysed reaction is 11-cis-retinol + NADP(+) = 11-cis-retinal + NADPH + H(+). It carries out the reaction 9-cis-retinol + NADP(+) = 9-cis-retinal + NADPH + H(+). It catalyses the reaction a 4-hydroxynonen-1-ol + NADP(+) = a 4-hydroxynonenal + NADPH + H(+). The enzyme catalyses (E)-non-2-en-1-ol + NADP(+) = (E)-non-2-enal + NADPH + H(+). The catalysed reaction is (Z)-non-6-en-1-ol + NADP(+) = (Z)-non-6-enal + NADPH + H(+). It carries out the reaction nonan-1-ol + NADP(+) = nonanal + NADPH + H(+). It participates in cofactor metabolism; retinol metabolism. In terms of biological role, retinoids dehydrogenase/reductase with a clear preference for NADP. Displays high activity towards 9-cis, 11-cis and all-trans-retinal. Shows very weak activity towards 13-cis-retinol. Also exhibits activity, albeit with lower affinity than for retinaldehydes, towards lipid peroxidation products (C9 aldehydes) such as 4-hydroxynonenal and trans-2-nonenal. May play an important function in photoreceptor cells to detoxify 4-hydroxynonenal and potentially other toxic aldehyde products resulting from lipid peroxidation. Has no dehydrogenase activity towards steroids. This chain is Retinol dehydrogenase 12 (RDH12), found in Bos taurus (Bovine).